A 251-amino-acid chain; its full sequence is Triosephosphate isomerase (251 aa).

9-11 serves as a coordination point for substrate; that stretch reads NWK. The active-site Electrophile is His95. The Proton acceptor role is filled by Glu167. Residues Gly173, Ser212, and 233–234 each bind substrate; that span reads GG.

The protein belongs to the triosephosphate isomerase family. Homodimer.

The protein resides in the cytoplasm. It catalyses the reaction D-glyceraldehyde 3-phosphate = dihydroxyacetone phosphate. It participates in carbohydrate biosynthesis; gluconeogenesis. The protein operates within carbohydrate degradation; glycolysis; D-glyceraldehyde 3-phosphate from glycerone phosphate: step 1/1. Functionally, involved in the gluconeogenesis. Catalyzes stereospecifically the conversion of dihydroxyacetone phosphate (DHAP) to D-glyceraldehyde-3-phosphate (G3P). The sequence is that of Triosephosphate isomerase from Pseudomonas syringae pv. tomato (strain ATCC BAA-871 / DC3000).